We begin with the raw amino-acid sequence, 266 residues long: Non-structural maintenance of chromosomes element 1 homolog (266 aa).

Residues 1 to 102 are interaction with NSMCE3; it reads MQGSTRRMSV…SISKMATDFA (102 aa). The segment at 191–232 adopts an RING-type; atypical zinc-finger fold; it reads CNICHSLLIQGQSCETCGIRMHLPCVAKYFQSNAEPRCPHCN. The interval 245 to 266 is disordered; the sequence is PEKERESGVSKSNKKSLRSRQH. Serine 251 bears the Phosphoserine mark. Over residues 256–266 the composition is skewed to basic residues; that stretch reads SNKKSLRSRQH.

The protein belongs to the NSE1 family. Component of the SMC5-SMC6 complex which consists at least of SMC5, SMC6, NSMCE2, NSMCE1, NSMCE4A or EID3 and NSMCE3. NSMCE1, NSMCE4A or EID3 and NSMCE3 probably form a subcomplex that bridges the head domains of the SMC5-SMC6 heterodimer. Interacts with NSMCE3. Post-translationally, ubiquitinated.

Its subcellular location is the nucleus. The protein resides in the chromosome. It localises to the telomere. The enzyme catalyses S-ubiquitinyl-[E2 ubiquitin-conjugating enzyme]-L-cysteine + [acceptor protein]-L-lysine = [E2 ubiquitin-conjugating enzyme]-L-cysteine + N(6)-ubiquitinyl-[acceptor protein]-L-lysine.. In terms of biological role, RING-type zinc finger-containing E3 ubiquitin ligase that assembles with melanoma antigen protein (MAGE) to catalyze the direct transfer of ubiquitin from E2 ubiquitin-conjugating enzyme to a specific substrate. Within MAGE-RING ubiquitin ligase complex, MAGE stimulates and specifies ubiquitin ligase activity likely through recruitment and/or stabilization of the E2 ubiquitin-conjugating enzyme at the E3:substrate complex. Involved in maintenance of genome integrity, DNA damage response and DNA repair. NSMCE3/MAGEG1 and NSMCE1 ubiquitin ligase are components of SMC5-SMC6 complex and may positively regulate homologous recombination-mediated DNA repair. The polypeptide is Non-structural maintenance of chromosomes element 1 homolog (NSMCE1) (Pongo abelii (Sumatran orangutan)).